The following is a 119-amino-acid chain: Large ribosomal subunit protein bL20 (119 aa).

This sequence belongs to the bacterial ribosomal protein bL20 family.

Binds directly to 23S ribosomal RNA and is necessary for the in vitro assembly process of the 50S ribosomal subunit. It is not involved in the protein synthesizing functions of that subunit. This chain is Large ribosomal subunit protein bL20, found in Chloroflexus aggregans (strain MD-66 / DSM 9485).